A 216-amino-acid polypeptide reads, in one-letter code: Vesicle-associated membrane protein 7A (216 aa).

Residues 1-189 are Cytoplasmic-facing; that stretch reads MSQTDILYAC…KRKLWWQNKK (189 aa). A Longin domain is found at 6 to 112; that stretch reads ILYACVSYKG…ATYDPFIRVL (107 aa). The 61-residue stretch at 126–186 folds into the v-SNARE coiled-coil homology domain; the sequence is KMNLVMDQVS…VALKRKLWWQ (61 aa). The chain crosses the membrane as a helical; Anchor for type IV membrane protein span at residues 190–210; it reads LAIAIGLVVCILIAVITLALL. Over 211–216 the chain is Vesicular; it reads KYFKVI.

The protein belongs to the synaptobrevin family. As to quaternary structure, component of the SNARE complex composed of syn7A, syn8A, vamp7A and vti1A.

Its subcellular location is the cytoplasmic vesicle. The protein localises to the secretory vesicle membrane. It is found in the golgi apparatus. The protein resides in the trans-Golgi network membrane. It localises to the late endosome membrane. Its subcellular location is the lysosome membrane. The protein localises to the endoplasmic reticulum membrane. It is found in the phagosome membrane. Its function is as follows. Involved in the targeting and/or fusion of transport vesicles to their target membrane during transport of proteins from the early endosome to the lysosome. Required for heterotypic fusion of late endosomes with lysosomes and homotypic lysosomal fusion. Required for calcium regulated lysosomal exocytosis. The protein is Vesicle-associated membrane protein 7A of Dictyostelium discoideum (Social amoeba).